Consider the following 315-residue polypeptide: Homoserine kinase (315 aa).

91 to 101 (PIGSGLGSSAS) lines the ATP pocket.

The protein belongs to the GHMP kinase family. Homoserine kinase subfamily.

The protein resides in the cytoplasm. The enzyme catalyses L-homoserine + ATP = O-phospho-L-homoserine + ADP + H(+). The protein operates within amino-acid biosynthesis; L-threonine biosynthesis; L-threonine from L-aspartate: step 4/5. Catalyzes the ATP-dependent phosphorylation of L-homoserine to L-homoserine phosphate. This Buchnera aphidicola subsp. Cinara cedri (strain Cc) protein is Homoserine kinase.